The following is a 159-amino-acid chain: NADH-quinone oxidoreductase subunit I (159 aa).

4Fe-4S ferredoxin-type domains are found at residues 51–80 (RRYE…IEAD) and 90–119 (TRYD…EGPN). The [4Fe-4S] cluster site is built by cysteine 60, cysteine 63, cysteine 66, cysteine 70, cysteine 99, cysteine 102, cysteine 105, and cysteine 109.

The protein belongs to the complex I 23 kDa subunit family. As to quaternary structure, NDH-1 is composed of 14 different subunits. Subunits NuoA, H, J, K, L, M, N constitute the membrane sector of the complex. The cofactor is [4Fe-4S] cluster.

It localises to the cell inner membrane. It carries out the reaction a quinone + NADH + 5 H(+)(in) = a quinol + NAD(+) + 4 H(+)(out). In terms of biological role, NDH-1 shuttles electrons from NADH, via FMN and iron-sulfur (Fe-S) centers, to quinones in the respiratory chain. The immediate electron acceptor for the enzyme in this species is believed to be ubiquinone. Couples the redox reaction to proton translocation (for every two electrons transferred, four hydrogen ions are translocated across the cytoplasmic membrane), and thus conserves the redox energy in a proton gradient. The sequence is that of NADH-quinone oxidoreductase subunit I from Rickettsia rickettsii (strain Sheila Smith).